The primary structure comprises 418 residues: Mitochondrial outer membrane protein SLC25A46 (418 aa).

2 positions are modified to phosphoserine: S32 and S35. T45 is modified (phosphothreonine). The disordered stretch occupies residues 46-96; that stretch reads PPDIPGSRNLHWGEKSPSYGVPSAPPTLEGSAEEPFPGGGEGPRPGPSSEQ. The stretch at 96-187 is one Solcar 1 repeat; it reads QLNRFAGFGI…GIISEFTPLP (92 aa). The next 6 membrane-spanning stretches (helical) occupy residues 103 to 123, 167 to 187, 202 to 222, 258 to 278, 314 to 334, and 382 to 402; these read FGIG…CIVL, FIVQ…TPLP, HLLL…ASLI, LLPL…HYII, FPEL…LYPL, and VFGF…HATI. One copy of the Solcar 2 repeat lies at 311–413; the sequence is DAYFPELIAN…QITKMIYSTL (103 aa).

The protein belongs to the mitochondrial carrier (TC 2.A.29) family. As to quaternary structure, associates with the mitochondrial contact site and cristae organizing system (MICOS) complex. May associate with the endoplasmic reticulum membrane protein complex (EMC).

The protein resides in the mitochondrion outer membrane. In terms of biological role, transmembrane protein of the mitochondrial outer membrane that controls mitochondrial organization. May regulate the assembly of the MICOS (mitochondrial contact site and cristae organizing system) complex which is essential to the biogenesis and dynamics of mitochondrial cristae, the inwards folds of the inner mitochondrial membrane. Through its interaction with the EMC (endoplasmic reticulum membrane protein complex), could regulate mitochondrial lipid homeostasis and thereby mitochondrial fission. This is Mitochondrial outer membrane protein SLC25A46 from Mus musculus (Mouse).